The chain runs to 395 residues: Abhydrolase domain-containing protein (395 aa).

The region spanning 117-331 is the AB hydrolase-1 domain; it reads PTIVINHGLT…INAIDDPIAP (215 aa). Active-site charge relay system residues include Ser-200, Asp-327, and His-356.

The protein belongs to the AB hydrolase superfamily. AB hydrolase 4 family.

The protein is Abhydrolase domain-containing protein (abhd) of Dictyostelium discoideum (Social amoeba).